The chain runs to 276 residues: Dermonecrotic toxin LvSicTox-alphaII1 (276 aa).

His-5 is a catalytic residue. Mg(2+)-binding residues include Glu-25 and Asp-27. Residue His-41 is the Nucleophile of the active site. 2 disulfide bridges follow: Cys-45–Cys-51 and Cys-47–Cys-193. Asp-85 provides a ligand contact to Mg(2+).

It belongs to the arthropod phospholipase D family. Class II subfamily. The cofactor is Mg(2+). As to expression, expressed by the venom gland.

Its subcellular location is the secreted. It catalyses the reaction an N-(acyl)-sphingosylphosphocholine = an N-(acyl)-sphingosyl-1,3-cyclic phosphate + choline. The enzyme catalyses an N-(acyl)-sphingosylphosphoethanolamine = an N-(acyl)-sphingosyl-1,3-cyclic phosphate + ethanolamine. It carries out the reaction a 1-acyl-sn-glycero-3-phosphocholine = a 1-acyl-sn-glycero-2,3-cyclic phosphate + choline. The catalysed reaction is a 1-acyl-sn-glycero-3-phosphoethanolamine = a 1-acyl-sn-glycero-2,3-cyclic phosphate + ethanolamine. Its function is as follows. Dermonecrotic toxins cleave the phosphodiester linkage between the phosphate and headgroup of certain phospholipids (sphingolipid and lysolipid substrates), forming an alcohol (often choline) and a cyclic phosphate. This toxin acts on sphingomyelin (SM). It may also act on ceramide phosphoethanolamine (CPE), lysophosphatidylcholine (LPC) and lysophosphatidylethanolamine (LPE), but not on lysophosphatidylserine (LPS), and lysophosphatidylglycerol (LPG). It acts by transphosphatidylation, releasing exclusively cyclic phosphate products as second products. Induces dermonecrosis, hemolysis, increased vascular permeability, edema, inflammatory response, and platelet aggregation. The sequence is that of Dermonecrotic toxin LvSicTox-alphaII1 from Loxosceles variegata (Recluse spider).